A 434-amino-acid chain; its full sequence is Histidinol dehydrogenase (434 aa).

Tyr-130, Gln-188, and Asn-211 together coordinate NAD(+). Substrate-binding residues include Ser-237, Gln-259, and His-262. Residues Gln-259 and His-262 each contribute to the Zn(2+) site. Residues Glu-326 and His-327 each act as proton acceptor in the active site. Positions 327, 360, 414, and 419 each coordinate substrate. Asp-360 contributes to the Zn(2+) binding site. His-419 provides a ligand contact to Zn(2+).

This sequence belongs to the histidinol dehydrogenase family. Homodimer. It depends on Zn(2+) as a cofactor.

The enzyme catalyses L-histidinol + 2 NAD(+) + H2O = L-histidine + 2 NADH + 3 H(+). Its pathway is amino-acid biosynthesis; L-histidine biosynthesis; L-histidine from 5-phospho-alpha-D-ribose 1-diphosphate: step 9/9. Functionally, catalyzes the sequential NAD-dependent oxidations of L-histidinol to L-histidinaldehyde and then to L-histidine. This is Histidinol dehydrogenase from Shigella boydii serotype 4 (strain Sb227).